The following is a 50-amino-acid chain: MKTIAVLLLVVAFALGLTACDGGGSAPGYTGPNGVIFVPAGGGVNVPIFF.

The chain is Gene 38 protein (38) from Mycobacterium (Mycobacteriophage D29).